We begin with the raw amino-acid sequence, 115 residues long: Large ribosomal subunit protein uL22 (115 aa).

The protein belongs to the universal ribosomal protein uL22 family. In terms of assembly, part of the 50S ribosomal subunit.

Functionally, this protein binds specifically to 23S rRNA; its binding is stimulated by other ribosomal proteins, e.g. L4, L17, and L20. It is important during the early stages of 50S assembly. It makes multiple contacts with different domains of the 23S rRNA in the assembled 50S subunit and ribosome. In terms of biological role, the globular domain of the protein is located near the polypeptide exit tunnel on the outside of the subunit, while an extended beta-hairpin is found that lines the wall of the exit tunnel in the center of the 70S ribosome. The chain is Large ribosomal subunit protein uL22 from Streptomyces griseus subsp. griseus (strain JCM 4626 / CBS 651.72 / NBRC 13350 / KCC S-0626 / ISP 5235).